A 210-amino-acid chain; its full sequence is Holliday junction resolvase RecU (210 aa).

A disordered region spans residues 1–34 (MAFHYPNGQPYSNHETKQPKKQGRHTSPTTLYGK). Residues Thr-90, Asp-92, Glu-105, and Gln-124 each contribute to the Mg(2+) site.

It belongs to the RecU family. The cofactor is Mg(2+).

The protein resides in the cytoplasm. It carries out the reaction Endonucleolytic cleavage at a junction such as a reciprocal single-stranded crossover between two homologous DNA duplexes (Holliday junction).. Functionally, endonuclease that resolves Holliday junction intermediates in genetic recombination. Cleaves mobile four-strand junctions by introducing symmetrical nicks in paired strands. Promotes annealing of linear ssDNA with homologous dsDNA. Required for DNA repair, homologous recombination and chromosome segregation. This is Holliday junction resolvase RecU from Latilactobacillus sakei subsp. sakei (strain 23K) (Lactobacillus sakei subsp. sakei).